The sequence spans 242 residues: Large ribosomal subunit protein uL1 (242 aa).

The protein belongs to the universal ribosomal protein uL1 family. Part of the 50S ribosomal subunit.

Binds directly to 23S rRNA. The L1 stalk is quite mobile in the ribosome, and is involved in E site tRNA release. In terms of biological role, protein L1 is also a translational repressor protein, it controls the translation of the L11 operon by binding to its mRNA. The sequence is that of Large ribosomal subunit protein uL1 from Dictyoglomus thermophilum (strain ATCC 35947 / DSM 3960 / H-6-12).